Reading from the N-terminus, the 178-residue chain is MACRVMEVLLRVLAILLSIAGALVMAKDKQDTFVMLGTVPVPLYARHSYVEAFVFLVYANGIVAIYCFIAVLLSLLAKSRVLAGLLFFMDQALAYLLLAAAAASTEVAYIAKRGEKKLVWGEVCSNFEHFCNLVGVSLVLTFLSVLVLVTLAILSGKRLFGHPPLCAPPSTPPVHQGV.

The Cytoplasmic portion of the chain corresponds to 1–4 (MACR). A helical transmembrane segment spans residues 5-25 (VMEVLLRVLAILLSIAGALVM). Topologically, residues 26–52 (AKDKQDTFVMLGTVPVPLYARHSYVEA) are extracellular. Residues 53–73 (FVFLVYANGIVAIYCFIAVLL) form a helical membrane-spanning segment. Residues 74–80 (SLLAKSR) are Cytoplasmic-facing. Residues 81 to 101 (VLAGLLFFMDQALAYLLLAAA) form a helical membrane-spanning segment. The Extracellular portion of the chain corresponds to 102–132 (AASTEVAYIAKRGEKKLVWGEVCSNFEHFCN). A helical membrane pass occupies residues 133 to 153 (LVGVSLVLTFLSVLVLVTLAI). Residues 154–178 (LSGKRLFGHPPLCAPPSTPPVHQGV) are Cytoplasmic-facing.

It belongs to the Casparian strip membrane proteins (CASP) family. Homodimer and heterodimers.

It localises to the cell membrane. The chain is CASP-like protein 2U3 from Pteridium aquilinum subsp. aquilinum (Bracken fern).